Consider the following 61-residue polypeptide: Small ribosomal subunit protein uS14 (61 aa).

Positions 24, 27, 40, and 43 each coordinate Zn(2+).

The protein belongs to the universal ribosomal protein uS14 family. Zinc-binding uS14 subfamily. Part of the 30S ribosomal subunit. Contacts proteins S3 and S10. Requires Zn(2+) as cofactor.

Functionally, binds 16S rRNA, required for the assembly of 30S particles and may also be responsible for determining the conformation of the 16S rRNA at the A site. This is Small ribosomal subunit protein uS14 from Staphylococcus carnosus (strain TM300).